Reading from the N-terminus, the 364-residue chain is DNA replication and repair protein RecF (364 aa).

23 to 30 (GPNGIGKS) is an ATP binding site.

This sequence belongs to the RecF family.

It is found in the cytoplasm. The RecF protein is involved in DNA metabolism; it is required for DNA replication and normal SOS inducibility. RecF binds preferentially to single-stranded, linear DNA. It also seems to bind ATP. The chain is DNA replication and repair protein RecF from Synechococcus sp. (strain CC9605).